The primary structure comprises 155 residues: Ribosomal RNA large subunit methyltransferase H (155 aa).

Residues leucine 73, glycine 104, and leucine 123–leucine 128 each bind S-adenosyl-L-methionine.

It belongs to the RNA methyltransferase RlmH family. As to quaternary structure, homodimer.

It is found in the cytoplasm. It catalyses the reaction pseudouridine(1915) in 23S rRNA + S-adenosyl-L-methionine = N(3)-methylpseudouridine(1915) in 23S rRNA + S-adenosyl-L-homocysteine + H(+). In terms of biological role, specifically methylates the pseudouridine at position 1915 (m3Psi1915) in 23S rRNA. The protein is Ribosomal RNA large subunit methyltransferase H of Stutzerimonas stutzeri (strain A1501) (Pseudomonas stutzeri).